The primary structure comprises 244 residues: Biosynthetic peptidoglycan transglycosylase (244 aa).

The helical transmembrane segment at 26-46 (FLSYFIGLTVALTFLFRFVPI) threads the bilayer.

The protein belongs to the glycosyltransferase 51 family.

Its subcellular location is the cell inner membrane. The catalysed reaction is [GlcNAc-(1-&gt;4)-Mur2Ac(oyl-L-Ala-gamma-D-Glu-L-Lys-D-Ala-D-Ala)](n)-di-trans,octa-cis-undecaprenyl diphosphate + beta-D-GlcNAc-(1-&gt;4)-Mur2Ac(oyl-L-Ala-gamma-D-Glu-L-Lys-D-Ala-D-Ala)-di-trans,octa-cis-undecaprenyl diphosphate = [GlcNAc-(1-&gt;4)-Mur2Ac(oyl-L-Ala-gamma-D-Glu-L-Lys-D-Ala-D-Ala)](n+1)-di-trans,octa-cis-undecaprenyl diphosphate + di-trans,octa-cis-undecaprenyl diphosphate + H(+). It functions in the pathway cell wall biogenesis; peptidoglycan biosynthesis. In terms of biological role, peptidoglycan polymerase that catalyzes glycan chain elongation from lipid-linked precursors. The chain is Biosynthetic peptidoglycan transglycosylase from Mannheimia succiniciproducens (strain KCTC 0769BP / MBEL55E).